The primary structure comprises 525 residues: GMP synthase [glutamine-hydrolyzing] (525 aa).

The Glutamine amidotransferase type-1 domain occupies 13–202; that stretch reads TILVLDFGSQ…AVDLCHAKQN (190 aa). Cysteine 89 functions as the Nucleophile in the catalytic mechanism. Active-site residues include histidine 176 and glutamate 178. The 198-residue stretch at 203–400 folds into the GMPS ATP-PPase domain; it reads WTMENFIDTE…LGIPHDLVWR (198 aa). 231-237 is an ATP binding site; the sequence is SGGVDST. Lysine 241 is covalently cross-linked (Glycyl lysine isopeptide (Lys-Gly) (interchain with G-Cter in ubiquitin)). Arginine 304 provides a ligand contact to XMP. Lysine 426 participates in a covalent cross-link: Glycyl lysine isopeptide (Lys-Gly) (interchain with G-Cter in ubiquitin). Aspartate 462, lysine 517, and glutamate 523 together coordinate XMP.

In terms of assembly, homodimer. The cofactor is Mg(2+).

It is found in the cytoplasm. Its subcellular location is the cytosol. It catalyses the reaction XMP + L-glutamine + ATP + H2O = GMP + L-glutamate + AMP + diphosphate + 2 H(+). It participates in purine metabolism; GMP biosynthesis; GMP from XMP (L-Gln route): step 1/1. Catalyzes the conversion of xanthine monophosphate (XMP) to GMP in the presence of glutamine and ATP through an adenyl-XMP intermediate. This Saccharomyces cerevisiae (strain ATCC 204508 / S288c) (Baker's yeast) protein is GMP synthase [glutamine-hydrolyzing].